We begin with the raw amino-acid sequence, 557 residues long: Formate--tetrahydrofolate ligase (557 aa).

66–73 (TPAGEGKS) is an ATP binding site.

This sequence belongs to the formate--tetrahydrofolate ligase family.

The catalysed reaction is (6S)-5,6,7,8-tetrahydrofolate + formate + ATP = (6R)-10-formyltetrahydrofolate + ADP + phosphate. The protein operates within one-carbon metabolism; tetrahydrofolate interconversion. The chain is Formate--tetrahydrofolate ligase from Clostridium botulinum (strain Okra / Type B1).